A 287-amino-acid polypeptide reads, in one-letter code: Bifunctional protein FolD (287 aa).

Residues 166 to 168 (GAS) and isoleucine 232 contribute to the NADP(+) site.

This sequence belongs to the tetrahydrofolate dehydrogenase/cyclohydrolase family. As to quaternary structure, homodimer.

It catalyses the reaction (6R)-5,10-methylene-5,6,7,8-tetrahydrofolate + NADP(+) = (6R)-5,10-methenyltetrahydrofolate + NADPH. The enzyme catalyses (6R)-5,10-methenyltetrahydrofolate + H2O = (6R)-10-formyltetrahydrofolate + H(+). The protein operates within one-carbon metabolism; tetrahydrofolate interconversion. Catalyzes the oxidation of 5,10-methylenetetrahydrofolate to 5,10-methenyltetrahydrofolate and then the hydrolysis of 5,10-methenyltetrahydrofolate to 10-formyltetrahydrofolate. The polypeptide is Bifunctional protein FolD (Pectobacterium carotovorum subsp. carotovorum (strain PC1)).